The primary structure comprises 573 residues: DNA polymerase lambda (573 aa).

The 97-residue stretch at 35-131 folds into the BRCT domain; that stretch reads EARGWLSSLR…RLTDTEGFSL (97 aa). 2 disordered regions span residues 126–204 and 214–233; these read TEGF…GPQV and TGHYPTPPEEDGGPDPAPEA. Residues 263 to 277 are DNA-binding; that stretch reads KAYSVQGDKWRALGY. The active-site Schiff-base intermediate with DNA is the K310. The DNA-binding stretch occupies residues 343 to 346; sequence GTKT. Residues R384, 415 to 418, and 424 to 427 contribute to the dCTP site; these read SYRR and GDVD. An involved in primer binding region spans residues 418–427; the sequence is RGKMTCGDVD. Mn(2+)-binding residues include D425, D427, and D488. The tract at residues 464-503 is DNA-binding; that stretch reads ENGQQQKYLGVCRLPGPGKRHRRLDIIVVPYCEFACALLY. A dCTP-binding site is contributed by N511.

The protein belongs to the DNA polymerase type-X family. In terms of assembly, interacts with PCNA. Interacts with PAXX; promoting POLL recruitment to double-strand breaks (DSBs) and stimulation of the end-filling activity of POLL. Interacts with XRCC4; promoting POLL recruitment to double-strand breaks (DSBs) and stimulation of the end-filling activity of POLL. Interacts with NHEJ1/XLF; promoting POLL recruitment to double-strand breaks (DSBs) and stimulation of the end-filling activity of POLL. Mn(2+) serves as cofactor.

Its subcellular location is the nucleus. It catalyses the reaction DNA(n) + a 2'-deoxyribonucleoside 5'-triphosphate = DNA(n+1) + diphosphate. Its function is as follows. DNA polymerase that functions in several pathways of DNA repair. Involved in base excision repair (BER) responsible for repair of lesions that give rise to abasic (AP) sites in DNA. Also contributes to DNA double-strand break repair by non-homologous end joining and homologous recombination. Has both template-dependent and template-independent (terminal transferase) DNA polymerase activities. Also has a 5'-deoxyribose-5-phosphate lyase (dRP lyase) activity. This chain is DNA polymerase lambda, found in Mus musculus (Mouse).